We begin with the raw amino-acid sequence, 1342 residues long: DNA-directed RNA polymerase subunit beta (1342 aa).

It belongs to the RNA polymerase beta chain family. As to quaternary structure, the RNAP catalytic core consists of 2 alpha, 1 beta, 1 beta' and 1 omega subunit. When a sigma factor is associated with the core the holoenzyme is formed, which can initiate transcription.

It catalyses the reaction RNA(n) + a ribonucleoside 5'-triphosphate = RNA(n+1) + diphosphate. Functionally, DNA-dependent RNA polymerase catalyzes the transcription of DNA into RNA using the four ribonucleoside triphosphates as substrates. This is DNA-directed RNA polymerase subunit beta from Buchnera aphidicola subsp. Acyrthosiphon pisum (strain 5A).